The primary structure comprises 456 residues: Ammonium transporter Amt2 (456 aa).

Helical transmembrane passes span 18-38 (LVWV…FAML), 61-81 (IGVI…AGLT), 109-129 (WLFG…AVAG), 141-161 (ILIA…GGFL), 170-190 (AGGM…AWII), 211-231 (ITFA…FNVG), 255-275 (VALV…GVAF), 281-301 (VDTL…TAIA), 304-324 (IVWP…PIVF), 339-359 (VFPV…VFAV), and 377-397 (VGVG…FGGF).

The protein belongs to the ammonia transporter channel (TC 1.A.11.2) family. In terms of assembly, homotrimer. Interacts with both GlnK1 and GlnK2 after ammonium shock.

The protein resides in the cell membrane. In terms of biological role, involved in the uptake of ammonium/ammonia (NH(4)(+)/NH(3)). Transport is electrogenic. The polypeptide is Ammonium transporter Amt2 (Haloferax mediterranei (strain ATCC 33500 / DSM 1411 / JCM 8866 / NBRC 14739 / NCIMB 2177 / R-4) (Halobacterium mediterranei)).